The chain runs to 350 residues: Aldo-keto reductase 1B (350 aa).

Tyr84 serves as the catalytic Proton donor. Substrate is bound at residue His146. NADP(+) is bound at residue 244–306; it reads SPLGSPNRPW…SVTKDRIESN (63 aa).

Belongs to the aldo/keto reductase family.

Its subcellular location is the cytoplasm. The enzyme catalyses an alditol + NADP(+) = an aldose + NADPH + H(+). The catalysed reaction is all-trans-retinol + NADP(+) = all-trans-retinal + NADPH + H(+). It catalyses the reaction 9-cis-retinol + NADP(+) = 9-cis-retinal + NADPH + H(+). It carries out the reaction 13-cis-retinol + NADP(+) = 13-cis-retinal + NADPH + H(+). The enzyme catalyses glycerol + NADP(+) = D-glyceraldehyde + NADPH + H(+). The catalysed reaction is glycerol + NADP(+) = L-glyceraldehyde + NADPH + H(+). It catalyses the reaction prenol + NADP(+) = 3-methyl-2-butenal + NADPH + H(+). It carries out the reaction (E)-hex-2-en-1-ol + NADP(+) = (E)-hex-2-enal + NADPH + H(+). The enzyme catalyses (E,E)-2,4-hexadien-1-ol + NADP(+) = (E,E)-2,4-hexadienal + NADPH + H(+). The catalysed reaction is a 4-hydroxynonen-1-ol + NADP(+) = a 4-hydroxynonenal + NADPH + H(+). It catalyses the reaction prostaglandin F2alpha + NADP(+) = prostaglandin H2 + NADPH + H(+). It carries out the reaction allyl alcohol + NADP(+) = acrolein + NADPH + H(+). The enzyme catalyses pyridine 3-methanol + NADP(+) = pyridine-3-carbaldehyde + NADPH + H(+). The catalysed reaction is 1-hexadecanoyl-2-(5-oxopentanoyl)-sn-glycero-3-phosphocholine + NADPH + H(+) = 1-hexadecanoyl-2-(5-hydroxypentanoyl)-sn-glycero-3-phosphocholine + NADP(+). It catalyses the reaction 1-hexadecanoyl-2-(7-oxoheptanoyl)-sn-glycero-3-phosphocholine + NADPH + H(+) = 1-hexadecanoyl-2-(7-hydroxyheptanoyl)-sn-glycero-3-phosphocholine + NADP(+). It carries out the reaction 1-hexadecanoyl-2-(9-oxononanoyl)-sn-glycero-3-phosphocholine + NADPH + H(+) = 1-hexadecanoyl-2-(9-hydroxynonanoyl)-sn-glycero-3-phosphocholine + NADP(+). The enzyme catalyses 1-hexadecanoyl-2-(5-oxopentanoyl)-sn-glycero-3-phosphoethanolamine + NADPH + H(+) = 1-hexadecanoyl-2-(5-hydroxypentanoyl)-sn-glycero-3-phosphoethanolamine + NADP(+). In terms of biological role, catalyzes the NADPH-dependent reduction of a wide variety of carbonyl-containing compounds to their corresponding alcohols. Displays enzymatic activity towards endogenous metabolites such as aromatic and aliphatic aldehydes, ketones, monosaccharides, bile acids and xenobiotics substrates. Key enzyme in the polyol pathway, catalyzes reduction of glucose to sorbitol during hyperglycemia. Reduces steroids and their derivatives and prostaglandins. Through production of prostaglandin F2alpha may regulate the activity of non-muscle myosin II in an autocrine or paracrine fashion; influences border cell and nurse cell stiffness to facilitate border cell cluster migration. Also regulates the cell surface localization of integrins in an autocrine or paracrine fashion; influences border cell adhesion to maintain border cell cluster morphology. In hemocytes, probably contributes to production of sugar alcohols in the hemolymph, which act as alarmins involved in gut-fat body innate immunological communication (GFIC); leads to activation of the imd/Relish signaling pathway in the fat body. In Drosophila melanogaster (Fruit fly), this protein is Aldo-keto reductase 1B.